The chain runs to 95 residues: Small ubiquitin-related modifier 2-A (95 aa).

Residue K11 forms a Glycyl lysine isopeptide (Lys-Gly) (interchain with G-Cter in SUMO) linkage. Residues 16–95 form the Ubiquitin-like domain; it reads DHINLKVAGQ…VFQQQTGGSF (80 aa). Residue G93 forms a Glycyl lysine isopeptide (Gly-Lys) (interchain with K-? in acceptor proteins) linkage. The propeptide occupies 94 to 95; that stretch reads SF.

The protein belongs to the ubiquitin family. SUMO subfamily. In terms of assembly, interacts with sae2 and ube2i. Covalently attached to a number of proteins, including top2. In terms of processing, polymeric chains can be formed through Lys-11 cross-linking. Post-translationally, cleavage of precursor form by a sentrin-specific protease is necessary for function.

It is found in the nucleus. Functionally, ubiquitin-like protein that can be covalently attached to proteins as a monomer or as a lysine-linked polymer. Covalent attachment via an isopeptide bond to its substrates requires prior activation by the E1 complex sae1-sae2 and linkage to the E2 enzyme ube2i, and can be promoted by an E3 ligase such as pias1-4. This post-translational modification on lysine residues of proteins plays a crucial role in a number of cellular processes such as nuclear transport, DNA replication and repair, mitosis and signal transduction. Polymeric sumo2 chains are also susceptible to polyubiquitination which functions as a signal for proteasomal degradation of modified proteins. This chain is Small ubiquitin-related modifier 2-A (sumo2-a), found in Xenopus laevis (African clawed frog).